The chain runs to 200 residues: Pyridoxal 5'-phosphate synthase subunit PdxT (200 aa).

52 to 54 contributes to the L-glutamine binding site; sequence GES. C84 (nucleophile) is an active-site residue. Residues R116 and 145–146 contribute to the L-glutamine site; that span reads IR. Active-site charge relay system residues include H181 and E183.

It belongs to the glutaminase PdxT/SNO family. As to quaternary structure, in the presence of PdxS, forms a dodecamer of heterodimers. Only shows activity in the heterodimer.

It carries out the reaction aldehydo-D-ribose 5-phosphate + D-glyceraldehyde 3-phosphate + L-glutamine = pyridoxal 5'-phosphate + L-glutamate + phosphate + 3 H2O + H(+). The catalysed reaction is L-glutamine + H2O = L-glutamate + NH4(+). The protein operates within cofactor biosynthesis; pyridoxal 5'-phosphate biosynthesis. Catalyzes the hydrolysis of glutamine to glutamate and ammonia as part of the biosynthesis of pyridoxal 5'-phosphate. The resulting ammonia molecule is channeled to the active site of PdxS. This is Pyridoxal 5'-phosphate synthase subunit PdxT from Sulfolobus acidocaldarius (strain ATCC 33909 / DSM 639 / JCM 8929 / NBRC 15157 / NCIMB 11770).